Reading from the N-terminus, the 134-residue chain is Probable glycine cleavage system H protein (134 aa).

A Lipoyl-binding domain is found at 29 to 110; the sequence is TVLVGITDYA…PYGAWIAKIK (82 aa). Lys70 carries the post-translational modification N6-lipoyllysine.

The protein belongs to the GcvH family. The glycine cleavage system is composed of four proteins: P, T, L and H. The cofactor is (R)-lipoate.

The glycine cleavage system catalyzes the degradation of glycine. The H protein shuttles the methylamine group of glycine from the P protein to the T protein. This is Probable glycine cleavage system H protein from Pyrococcus horikoshii (strain ATCC 700860 / DSM 12428 / JCM 9974 / NBRC 100139 / OT-3).